The sequence spans 427 residues: Zinc finger protein 134 (427 aa).

A Glycyl lysine isopeptide (Lys-Gly) (interchain with G-Cter in SUMO2) cross-link involves residue Lys-20. Residues 50 to 72 (LPCDICGPILKDILHLDEHQGTH) form a C2H2-type 1 zinc finger. The segment at 78 to 100 (HTCGACGRQFWFSANLHQYQKCY) adopts a C2H2-type 2; degenerate zinc-finger fold. Glycyl lysine isopeptide (Lys-Gly) (interchain with G-Cter in SUMO2) cross-links involve residues Lys-135 and Lys-139. 9 consecutive C2H2-type zinc fingers follow at residues 176–198 (YKCS…QRIH), 204–226 (YECS…QRIH), 232–254 (YECS…KRIH), 260–282 (YKCN…QRVH), 288–310 (YKCS…ESIH), 316–338 (YDCS…QRIH), 344–366 (FECI…QRVH), 372–394 (FVCS…QRVH), and 400–422 (YECS…QKVH).

This sequence belongs to the krueppel C2H2-type zinc-finger protein family.

Its subcellular location is the nucleus. May be involved in transcriptional regulation. This chain is Zinc finger protein 134 (ZNF134), found in Homo sapiens (Human).